A 510-amino-acid chain; its full sequence is MTKRALISVSDKTGVVEFAAQLQQRGWELLSTGGTFATLSGAGIPVRQVSDVTGFPEMLDGRVKTLHPAIHGGILARREAGHLGQLAAQDIGTIDLVCVNLYPFRETVARGAPDPEVIENIDIGGPAMIRSAAKNHDAVLVLVDPADYALALQDEVSPAERRRLAAKAYRHTSEYDAAITAYLSGESDELPTQLPEHLSLDLTRTAQVRYGENPHQPGAIYRWGNARGPVIDAQVVAGKPMSFNNYADADAAWSLCQELAAQEQGAVCVAVKHANPCGVAVAADVKTAWERARDADTLSVFGGVVAVSQPVDFGAAQSMKGTFLEVLIAPDVTPDAVEWFAAKKPDLRVLIAGQPQGVSVLDVRPLTGGFAVQERDARPWDDLCPEVVTERQPSEQEWADLRFAWAVVKGARSNAVALCKGGVTVGLGAGAVSRIWAAERAIANAGEAAQGAVLASEAFFPFDDVVRLAASAGVTAVLQPGGAKRDPEVIAACNELGISMVFTGSRHFRH.

The MGS-like domain maps to 1 to 143 (MTKRALISVS…KNHDAVLVLV (143 aa)).

Belongs to the PurH family.

It carries out the reaction (6R)-10-formyltetrahydrofolate + 5-amino-1-(5-phospho-beta-D-ribosyl)imidazole-4-carboxamide = 5-formamido-1-(5-phospho-D-ribosyl)imidazole-4-carboxamide + (6S)-5,6,7,8-tetrahydrofolate. The catalysed reaction is IMP + H2O = 5-formamido-1-(5-phospho-D-ribosyl)imidazole-4-carboxamide. It participates in purine metabolism; IMP biosynthesis via de novo pathway; 5-formamido-1-(5-phospho-D-ribosyl)imidazole-4-carboxamide from 5-amino-1-(5-phospho-D-ribosyl)imidazole-4-carboxamide (10-formyl THF route): step 1/1. It functions in the pathway purine metabolism; IMP biosynthesis via de novo pathway; IMP from 5-formamido-1-(5-phospho-D-ribosyl)imidazole-4-carboxamide: step 1/1. In Deinococcus radiodurans (strain ATCC 13939 / DSM 20539 / JCM 16871 / CCUG 27074 / LMG 4051 / NBRC 15346 / NCIMB 9279 / VKM B-1422 / R1), this protein is Bifunctional purine biosynthesis protein PurH.